Here is a 533-residue protein sequence, read N- to C-terminus: MNSPASFVKSLLAQCCLGGICEWVVCPGARNMALLQVLAAAEDLVKWTHFDERSAAFFALGRIQDIGLPVAVVTTSGTAAAELLPAVVEAYYQRRPLLLLTADRPAACRGSAAPQAIEQADLFGIYAPTIDLETPESLPEDILQDWDYASPLHINVCLPDPDPAWNPGSCDLYPAEPPEENGFRGSLAELARALRFKSRGGLVVMIGGLDPTEQAPARWLANELKAPVVADATSGLREELAHLALTDADALLREHPPAVLLRLGDVPVARFWRDLEDIPATEVFSVTRTGFSGLARPSSVVTGDLEAILHALGDIDTVGDVNGLRAMNKRRKALMEELLITCPESEQAMVRSFSCFAADGDCIYLGNSMPVRYWNSFAQTSIPTENVRANRGTNGIDGQISGFLGVSARCSRSWALVGDLTAMYDSNALALLPQLDRGTRVLGVINNGGGGIFRTLPGADGQPETMRKLLVQPHAHSFKAIAEQWGMRYLTIRTAEDFDQLDSLEENSQTLVELIPDREQTEQIRLRLANAQV.

The protein belongs to the TPP enzyme family. MenD subfamily. In terms of assembly, homodimer. Mg(2+) is required as a cofactor. Requires Mn(2+) as cofactor. The cofactor is thiamine diphosphate.

It catalyses the reaction isochorismate + 2-oxoglutarate + H(+) = 5-enolpyruvoyl-6-hydroxy-2-succinyl-cyclohex-3-ene-1-carboxylate + CO2. Its pathway is quinol/quinone metabolism; 1,4-dihydroxy-2-naphthoate biosynthesis; 1,4-dihydroxy-2-naphthoate from chorismate: step 2/7. It participates in quinol/quinone metabolism; menaquinone biosynthesis. Functionally, catalyzes the thiamine diphosphate-dependent decarboxylation of 2-oxoglutarate and the subsequent addition of the resulting succinic semialdehyde-thiamine pyrophosphate anion to isochorismate to yield 2-succinyl-5-enolpyruvyl-6-hydroxy-3-cyclohexene-1-carboxylate (SEPHCHC). The protein is 2-succinyl-5-enolpyruvyl-6-hydroxy-3-cyclohexene-1-carboxylate synthase of Akkermansia muciniphila (strain ATCC BAA-835 / DSM 22959 / JCM 33894 / BCRC 81048 / CCUG 64013 / CIP 107961 / Muc).